The primary structure comprises 743 residues: Probable TonB-dependent receptor BfrD (743 aa).

Residues 1-30 (MKFYSSHPMPESLAAAIAVPLLGLLPAAQA) form the signal peptide. Positions 62–168 (PLADTPRTVQ…AGGSINLVTK (107 aa)) constitute a TBDR plug domain. Residues 173–743 (QDFTEVQAGI…SAMLTFKLSY (571 aa)) form the TBDR beta-barrel domain. A TonB C-terminal box motif is present at residues 726–743 (YAALGPGRSAMLTFKLSY).

This sequence belongs to the TonB-dependent receptor family.

The protein localises to the cell outer membrane. Probably involved in iron transport. This Bordetella pertussis (strain Tohama I / ATCC BAA-589 / NCTC 13251) protein is Probable TonB-dependent receptor BfrD (bfrD).